The primary structure comprises 456 residues: Septin-10 (456 aa).

A Septin-type G domain is found at 40 to 306; sequence QGFCFNILCV…ELYRRCKLQE (267 aa). A G1 motif region spans residues 50–57; that stretch reads GETGIGKS. GTP contacts are provided by residues 50 to 57, G105, 186 to 194, G240, and R255; these read GETGIGKS and KADTISKSE. Residues 102-105 are G3 motif; it reads NTVG. The tract at residues 185-188 is G4 motif; it reads AKAD. Residue S418 is modified to Phosphoserine.

Belongs to the TRAFAC class TrmE-Era-EngA-EngB-Septin-like GTPase superfamily. Septin GTPase family. In terms of assembly, septins polymerize into heterooligomeric protein complexes that form filaments, and can associate with cellular membranes, actin filaments and microtubules. GTPase activity is required for filament formation. Interacts with ADGB. Post-translationally, proteolytically cleaved in vitro in a calmodulin-dependent manner.

The protein resides in the cytoplasm. The protein localises to the cytoskeleton. Its subcellular location is the cell projection. It is found in the cilium. It localises to the flagellum. In terms of biological role, filament-forming cytoskeletal GTPase. May play a role in cytokinesis (Potential). The chain is Septin-10 from Rattus norvegicus (Rat).